A 283-amino-acid chain; its full sequence is Elongation factor Ts (283 aa).

Residues 79–82 (TDFV) are involved in Mg(2+) ion dislocation from EF-Tu.

Belongs to the EF-Ts family.

It is found in the cytoplasm. In terms of biological role, associates with the EF-Tu.GDP complex and induces the exchange of GDP to GTP. It remains bound to the aminoacyl-tRNA.EF-Tu.GTP complex up to the GTP hydrolysis stage on the ribosome. The sequence is that of Elongation factor Ts from Shewanella sp. (strain ANA-3).